Consider the following 68-residue polypeptide: ATP synthase subunit c (68 aa).

2 helical membrane passes run 4-24 (IAAAIAIGLSALGAGIGNGLI) and 45-65 (IMFIGIGLVEALPIIGVVIAF).

Belongs to the ATPase C chain family. As to quaternary structure, F-type ATPases have 2 components, F(1) - the catalytic core - and F(0) - the membrane proton channel. F(1) has five subunits: alpha(3), beta(3), gamma(1), delta(1), epsilon(1). F(0) has three main subunits: a(1), b(2) and c(10-14). The alpha and beta chains form an alternating ring which encloses part of the gamma chain. F(1) is attached to F(0) by a central stalk formed by the gamma and epsilon chains, while a peripheral stalk is formed by the delta and b chains.

It is found in the cell membrane. In terms of biological role, f(1)F(0) ATP synthase produces ATP from ADP in the presence of a proton or sodium gradient. F-type ATPases consist of two structural domains, F(1) containing the extramembraneous catalytic core and F(0) containing the membrane proton channel, linked together by a central stalk and a peripheral stalk. During catalysis, ATP synthesis in the catalytic domain of F(1) is coupled via a rotary mechanism of the central stalk subunits to proton translocation. Functionally, key component of the F(0) channel; it plays a direct role in translocation across the membrane. A homomeric c-ring of between 10-14 subunits forms the central stalk rotor element with the F(1) delta and epsilon subunits. The polypeptide is ATP synthase subunit c (Staphylococcus saprophyticus subsp. saprophyticus (strain ATCC 15305 / DSM 20229 / NCIMB 8711 / NCTC 7292 / S-41)).